Reading from the N-terminus, the 354-residue chain is Guanine nucleotide-binding protein G(t) subunit alpha-2 (354 aa).

Residues 1–28 (MGSGISAEDKELARRSKELEKKLQEDAD) form a disordered region. G2 is lipidated: N-myristoyl glycine. Positions 7 to 28 (AEDKELARRSKELEKKLQEDAD) are enriched in basic and acidic residues. The G-alpha domain maps to 32–354 (KTVKLLLLGA…KENLKDCGLF (323 aa)). Residues 35 to 48 (KLLLLGAGESGKST) are G1 motif. Residues 40–47 (GAGESGKS), 175–181 (LRSRVKT), 200–204 (DVGGQ), 269–272 (NKKD), and A326 contribute to the GTP site. 2 residues coordinate Mg(2+): S47 and T181. The G2 motif stretch occupies residues 173-181 (DVLRSRVKT). The tract at residues 196-205 (FRMFDVGGQR) is G3 motif. The segment at 265 to 272 (VLFLNKKD) is G4 motif. The G5 motif stretch occupies residues 324-329 (TCATDT).

The protein belongs to the G-alpha family. G(i/o/t/z) subfamily. In terms of assembly, g proteins are composed of 3 units; alpha, beta and gamma. The alpha chain contains the guanine nucleotide binding site. In terms of tissue distribution, in the retina, expressed in the rod photoreceptors.

The protein localises to the cell projection. It is found in the cilium. The protein resides in the photoreceptor outer segment. Its subcellular location is the photoreceptor inner segment. Its function is as follows. Guanine nucleotide-binding proteins (G proteins) are involved as modulators or transducers in various transmembrane signaling systems. Transducin is an amplifier and one of the transducers of a visual impulse that performs the coupling between rhodopsin and cGMP-phosphodiesterase. This is Guanine nucleotide-binding protein G(t) subunit alpha-2 (Gnat2) from Mus musculus (Mouse).